A 309-amino-acid chain; its full sequence is MQQEILKIATRQSPLALWQANFVKDRLTEIYPDLTVELVPMVTKGDVILDTPLAKIGGKGLFVKELENALLNGDADIAVHSMKDVPMEFPAGLGLSVICKREDPRDAFVSNRYRTLDDLPPGAIVGTSSLRRQCQLKKRRPDLNIRSLRGNVGTRLSKLDQGDYDAIILASAGLIRLALPERIASFIETEISLPAAGQGAVGIECRINDQRVQKLLAPLADTETTACVLAERAMNNRLQGGCQVPIGGYAVLNGNELHLRALVGALDGSKIIRAEGKSAVENAEVLGIQIAESLLAQGADKILAEVYNG.

The residue at position 242 (C242) is an S-(dipyrrolylmethanemethyl)cysteine.

It belongs to the HMBS family. Monomer. Requires dipyrromethane as cofactor.

The enzyme catalyses 4 porphobilinogen + H2O = hydroxymethylbilane + 4 NH4(+). It participates in porphyrin-containing compound metabolism; protoporphyrin-IX biosynthesis; coproporphyrinogen-III from 5-aminolevulinate: step 2/4. In terms of biological role, tetrapolymerization of the monopyrrole PBG into the hydroxymethylbilane pre-uroporphyrinogen in several discrete steps. In Actinobacillus succinogenes (strain ATCC 55618 / DSM 22257 / CCUG 43843 / 130Z), this protein is Porphobilinogen deaminase.